The following is a 258-amino-acid chain: Imidazole glycerol phosphate synthase subunit HisF (258 aa).

Residues D12 and D131 contribute to the active site.

It belongs to the HisA/HisF family. Heterodimer of HisH and HisF.

The protein resides in the cytoplasm. The enzyme catalyses 5-[(5-phospho-1-deoxy-D-ribulos-1-ylimino)methylamino]-1-(5-phospho-beta-D-ribosyl)imidazole-4-carboxamide + L-glutamine = D-erythro-1-(imidazol-4-yl)glycerol 3-phosphate + 5-amino-1-(5-phospho-beta-D-ribosyl)imidazole-4-carboxamide + L-glutamate + H(+). It functions in the pathway amino-acid biosynthesis; L-histidine biosynthesis; L-histidine from 5-phospho-alpha-D-ribose 1-diphosphate: step 5/9. In terms of biological role, IGPS catalyzes the conversion of PRFAR and glutamine to IGP, AICAR and glutamate. The HisF subunit catalyzes the cyclization activity that produces IGP and AICAR from PRFAR using the ammonia provided by the HisH subunit. This is Imidazole glycerol phosphate synthase subunit HisF from Arthrobacter sp. (strain FB24).